Here is a 438-residue protein sequence, read N- to C-terminus: Glutamyl-tRNA(Gln) amidotransferase subunit D (438 aa).

Residues 91-421 (KNLSILSTGG…SEIYEIMKTN (331 aa)) form the Asparaginase/glutaminase domain. Catalysis depends on residues threonine 101, threonine 177, aspartate 178, and lysine 254.

It belongs to the asparaginase 1 family. GatD subfamily. In terms of assembly, heterodimer of GatD and GatE.

It catalyses the reaction L-glutamyl-tRNA(Gln) + L-glutamine + ATP + H2O = L-glutaminyl-tRNA(Gln) + L-glutamate + ADP + phosphate + H(+). Functionally, allows the formation of correctly charged Gln-tRNA(Gln) through the transamidation of misacylated Glu-tRNA(Gln) in organisms which lack glutaminyl-tRNA synthetase. The reaction takes place in the presence of glutamine and ATP through an activated gamma-phospho-Glu-tRNA(Gln). The GatDE system is specific for glutamate and does not act on aspartate. This is Glutamyl-tRNA(Gln) amidotransferase subunit D from Methanosphaera stadtmanae (strain ATCC 43021 / DSM 3091 / JCM 11832 / MCB-3).